Consider the following 134-residue polypeptide: ATP synthase epsilon chain (134 aa).

The protein belongs to the ATPase epsilon chain family. F-type ATPases have 2 components, CF(1) - the catalytic core - and CF(0) - the membrane proton channel. CF(1) has five subunits: alpha(3), beta(3), gamma(1), delta(1), epsilon(1). CF(0) has three main subunits: a, b and c.

It is found in the cellular thylakoid membrane. Functionally, produces ATP from ADP in the presence of a proton gradient across the membrane. The chain is ATP synthase epsilon chain from Prochlorococcus marinus (strain MIT 9515).